The following is a 448-amino-acid chain: Packaging protein 1 (448 aa).

The segment at Met1–Leu76 is disordered. Residues Pro22–Pro31 show a composition bias toward basic residues. Residues Arg56 to Ser67 are compositionally biased toward polar residues. ATP is bound at residue Gly171–Ser178. The DNA-binding stretch occupies residues Arg440–Lys448.

It belongs to the adenoviridae packaging protein 1 family. Homodimer. Part of a genome packaging complex composed of packaging proteins 1, 2 and 3; this complex specifically binds to the packaging sequence on the left end of viral genomic DNA and performs packaging of the viral genome. Interacts with protein 33K.

Its subcellular location is the virion. The protein resides in the host nucleus. It localises to the host nucleoplasm. It is found in the host nucleolus. In terms of biological role, component of the packaging machinery which encapsidates the viral DNA into preformed capsids and transcriptional activator of the viral major late promoter (MLP). Binds, along with packaging proteins 2 and 3, to the specific packaging sequence on the left end of viral genomic DNA and displays ATPase activity thereby providing the power stroke of the packaging machinery. The activity of packaging protein IVa2 is stimulated by protein 33K which acts as a terminase. May be the protein that pumps DNA into the capsid powered by ATP hydrolysis. Specifically binds to the 5'-CG-3' nucleotides of the repeats making up the packaging sequence. Component of the DEF-A and DEF-B transcription factors that bind downstream elements of the major late promoter (MLP), and stimulate transcription from the MLP after initiation of viral DNA replication. DEF-A is a heterodimer packaging proteins 1 and 2 and DEF-B is a homodimer of packaging protein 1. The polypeptide is Packaging protein 1 (Human adenovirus B serotype 7 (HAdV-7)).